Here is a 327-residue protein sequence, read N- to C-terminus: Aldo-keto reductase family 7 member A3 (327 aa).

At serine 2 the chain carries Phosphoserine. Positions 13, 18, and 40 each coordinate NADP(+). The active-site Proton donor is the tyrosine 45. Histidine 109 provides a ligand contact to citrate. Positions 140, 194, 196, 198, 204, and 218 each coordinate NADP(+). Citrate is bound by residues tyrosine 228 and arginine 231. The NADP(+) site is built by serine 286, glutamine 290, glutamine 293, asparagine 294, and arginine 327.

This sequence belongs to the aldo/keto reductase family. Aldo/keto reductase 2 subfamily. Homodimer. Heterodimer with AKR7A2.

The protein localises to the cytoplasm. It catalyses the reaction a primary alcohol + NADP(+) = an aldehyde + NADPH + H(+). The enzyme catalyses aflatoxin B1 dialdehyde + NADPH + H(+) = aflatoxin B1 C(6a)-monoaldehyde + NADP(+). It carries out the reaction aflatoxin B1 dialdehyde + NADPH + H(+) = aflatoxin B1 C(8)-monoaldehyde + NADP(+). The catalysed reaction is aflatoxin B1 C(6a)-monoaldehyde + NADPH + 2 H(+) = aflatoxin B1 triol + NADP(+). Inhibited by citrate. Its function is as follows. Catalyzes the NADPH-dependent reduction of various carbonyl-containing compounds, including aldehydes, ketones, and toxic products from cellular metabolism or environmental exposure. Can reduce the dialdehyde form of aflatoxin B1 (AFB1) into alcohol derivatives, via monoaldehydes intermediates, thus preventing the formation of protein adducts that contribute to AFB1-induced toxicity. The polypeptide is Aldo-keto reductase family 7 member A3 (Rattus norvegicus (Rat)).